A 657-amino-acid polypeptide reads, in one-letter code: Serine/threonine-protein kinase BUR1 (657 aa).

In terms of domain architecture, Protein kinase spans 60 to 366 (YREDEKLGQG…AMSAKHHPWF (307 aa)). ATP is bound by residues 66–74 (LGQGTFGEV) and Lys89. The active-site Proton acceptor is Asp195. A Phosphothreonine; by CAK modification is found at Thr240. At Ser400 the chain carries Phosphoserine. The residue at position 405 (Thr405) is a Phosphothreonine. Residues 414–657 (KGESPVVKNL…FQNSDIADLY (244 aa)) form a disordered region. Ser417 is modified (phosphoserine). Low complexity predominate over residues 489 to 501 (NNSSRNNRFSGNS). Composition is skewed to polar residues over residues 535 to 552 (SRYQGNSNESRYKNSPND), 564 to 595 (PETNFNRQPQKYSRQESNAPINKNYNPSNGSR), and 614 to 625 (ISPSQGQHQLTS). The span at 627-649 (PIEKKNGSFKDERAKPDESKEFQ) shows a compositional bias: basic and acidic residues. Phosphoserine is present on Ser634.

This sequence belongs to the protein kinase superfamily. CMGC Ser/Thr protein kinase family. CDC2/CDKX subfamily. In terms of assembly, belongs to the BUR kinase complex composed of SGV1/BUR1 and BUR2. Interacts with BUR2 and RBP1.

It localises to the nucleus. The enzyme catalyses L-seryl-[protein] + ATP = O-phospho-L-seryl-[protein] + ADP + H(+). The catalysed reaction is L-threonyl-[protein] + ATP = O-phospho-L-threonyl-[protein] + ADP + H(+). It catalyses the reaction [DNA-directed RNA polymerase] + ATP = phospho-[DNA-directed RNA polymerase] + ADP + H(+). Functionally, serine/threonine-protein kinase component of the BUR kinase complex involved in transcription regulation. This complex phosphorylates 'Ser-120' of the UBC2/RAD6 ubiquitin-conjugating enzyme (E2), leading to monoubiquitination of histone H2B, the localization of the PAF1 complex to the chromatin, and the silencing of telomeric-associated genes. Also required for histone H3 'Lys-4' trimethylation. May phosphorylate the 'Ser-5' of the RBP1 carboxy-terminal domain (CTD) repeats. Necessary for the recovery from pheromone-induced growth arrest in the cell cycle G1 phase. The kinase activity of the complex requires the presence of BUR2. The polypeptide is Serine/threonine-protein kinase BUR1 (SGV1) (Saccharomyces cerevisiae (strain ATCC 204508 / S288c) (Baker's yeast)).